A 701-amino-acid chain; its full sequence is Elongation factor G (701 aa).

Residues 8–290 (SLYRNIGISA…AVIDYLPAPT (283 aa)) form the tr-type G domain. GTP is bound by residues 17 to 24 (AHIDAGKT), 88 to 92 (DTPGH), and 142 to 145 (NKMD).

This sequence belongs to the TRAFAC class translation factor GTPase superfamily. Classic translation factor GTPase family. EF-G/EF-2 subfamily.

It is found in the cytoplasm. Its function is as follows. Catalyzes the GTP-dependent ribosomal translocation step during translation elongation. During this step, the ribosome changes from the pre-translocational (PRE) to the post-translocational (POST) state as the newly formed A-site-bound peptidyl-tRNA and P-site-bound deacylated tRNA move to the P and E sites, respectively. Catalyzes the coordinated movement of the two tRNA molecules, the mRNA and conformational changes in the ribosome. The polypeptide is Elongation factor G (Haemophilus ducreyi (strain 35000HP / ATCC 700724)).